Consider the following 226-residue polypeptide: UPF0758 protein GTNG_2548 (226 aa).

In terms of domain architecture, MPN spans 104–226 (VIRCPEDGAK…FISLKEKGYV (123 aa)). Zn(2+) contacts are provided by His-175, His-177, and Asp-188. A JAMM motif motif is present at residues 175–188 (HNHPSGDPTPSRED).

The protein belongs to the UPF0758 family.

The sequence is that of UPF0758 protein GTNG_2548 from Geobacillus thermodenitrificans (strain NG80-2).